We begin with the raw amino-acid sequence, 285 residues long: Homeobox protein vex1 (285 aa).

2 disordered regions span residues 30-54 (KSGN…LPSV) and 69-88 (NEER…APQE). Positions 69-80 (NEERSPPVKDQL) are enriched in basic and acidic residues. The homeobox DNA-binding region spans 131-190 (AARARTKFSPEQLEELERSFKENRYIGSSEKRRLSKVLKLSETQIKTWFQNRRMKFKRQT).

As to expression, widely expressed in the embryo prior to gastrulation. Becomes restricted to the ventral marginal zone by mid/late gastrulation. Ventral localization persists during gastrulation and neurulation in the ventral region of the closed blastopore and in the proctodeum during tail bud stages.

It localises to the nucleus. Its function is as follows. Transcriptional repressor. Acts in a ventral signaling pathway downstream of bmp4 to antagonize the Spemann organizer and ventrally pattern the embryonic mesoderm. Represses transcription of the dorsal genes gsc and otx2. In Xenopus laevis (African clawed frog), this protein is Homeobox protein vex1.